Consider the following 29-residue polypeptide: Trypsin inhibitor 3 (29 aa).

3 cysteine pairs are disulfide-bonded: cysteine 3/cysteine 20, cysteine 10/cysteine 22, and cysteine 16/cysteine 28.

It belongs to the protease inhibitor I7 (squash-type serine protease inhibitor) family.

It localises to the secreted. In terms of biological role, inhibits trypsin. This Luffa aegyptiaca (Sponge gourd) protein is Trypsin inhibitor 3.